The sequence spans 372 residues: Glutamate 5-kinase (372 aa).

Lys-14 serves as a coordination point for ATP. The substrate site is built by Ser-54, Asp-141, and Asn-153. An ATP-binding site is contributed by 173–174; sequence TD. In terms of domain architecture, PUA spans 280–358; that stretch reads RGTLVLDDGA…DAIEALLGYV (79 aa).

This sequence belongs to the glutamate 5-kinase family.

Its subcellular location is the cytoplasm. The catalysed reaction is L-glutamate + ATP = L-glutamyl 5-phosphate + ADP. It participates in amino-acid biosynthesis; L-proline biosynthesis; L-glutamate 5-semialdehyde from L-glutamate: step 1/2. Functionally, catalyzes the transfer of a phosphate group to glutamate to form L-glutamate 5-phosphate. The chain is Glutamate 5-kinase from Pseudomonas aeruginosa (strain UCBPP-PA14).